A 232-amino-acid polypeptide reads, in one-letter code: Polycomb group RING finger protein 5-B (232 aa).

The segment at 18–57 (CFVCKGYLIKPTTVTECLHTFCKSCIVQHFEDSNDCPKCG) adopts an RING-type zinc-finger fold. The span at 93-104 (QEDEFWRRKESN) shows a compositional bias: basic and acidic residues. A disordered region spans residues 93–128 (QEDEFWRRKESNDENGPMCKKRRVDEEDDDKGDGDY).

In terms of assembly, component of a PRC1-like complex.

The protein resides in the nucleus. Functionally, component of Polycomb group (PcG) multiprotein complexes; the complex class is required to maintain the transcriptionally repressive state of some genes. The protein is Polycomb group RING finger protein 5-B (pcgf5b) of Danio rerio (Zebrafish).